The primary structure comprises 497 residues: uncharacterized protein (497 aa).

ABC transporter domains follow at residues 9–247 (VSVR…MGQA) and 256–496 (ARPA…TGMA). 41 to 48 (GGNGAGKS) is an ATP binding site.

It belongs to the ABC transporter superfamily. Ribose importer (TC 3.A.1.2.1) family.

The protein localises to the cell membrane. Probably part of the binding-protein-dependent transport system y4mIJK. This system probably transports a sugar. Probably responsible for energy coupling to the transport system. This is an uncharacterized protein from Sinorhizobium fredii (strain NBRC 101917 / NGR234).